A 417-amino-acid chain; its full sequence is Serine hydroxymethyltransferase (417 aa).

(6S)-5,6,7,8-tetrahydrofolate contacts are provided by residues L121 and 125-127 (GHL). Residue K229 is modified to N6-(pyridoxal phosphate)lysine. 355–357 (SPF) is a binding site for (6S)-5,6,7,8-tetrahydrofolate.

It belongs to the SHMT family. As to quaternary structure, homodimer. The cofactor is pyridoxal 5'-phosphate.

The protein resides in the cytoplasm. It catalyses the reaction (6R)-5,10-methylene-5,6,7,8-tetrahydrofolate + glycine + H2O = (6S)-5,6,7,8-tetrahydrofolate + L-serine. The protein operates within one-carbon metabolism; tetrahydrofolate interconversion. Its pathway is amino-acid biosynthesis; glycine biosynthesis; glycine from L-serine: step 1/1. Functionally, catalyzes the reversible interconversion of serine and glycine with tetrahydrofolate (THF) serving as the one-carbon carrier. This reaction serves as the major source of one-carbon groups required for the biosynthesis of purines, thymidylate, methionine, and other important biomolecules. Also exhibits THF-independent aldolase activity toward beta-hydroxyamino acids, producing glycine and aldehydes, via a retro-aldol mechanism. This Shewanella baltica (strain OS223) protein is Serine hydroxymethyltransferase.